Here is a 501-residue protein sequence, read N- to C-terminus: Vitamin D 25-hydroxylase (501 aa).

Alanine 250 serves as a coordination point for substrate. Cysteine 448 provides a ligand contact to heme.

This sequence belongs to the cytochrome P450 family. As to quaternary structure, homodimer. Requires heme as cofactor. In terms of tissue distribution, highly expressed in the liver and testis.

The protein localises to the endoplasmic reticulum membrane. It is found in the microsome membrane. The enzyme catalyses calciol + reduced [NADPH--hemoprotein reductase] + O2 = calcidiol + oxidized [NADPH--hemoprotein reductase] + H2O + H(+). The catalysed reaction is vitamin D2 + reduced [NADPH--hemoprotein reductase] + O2 = 25-hydroxyvitamin D2 + oxidized [NADPH--hemoprotein reductase] + H2O + H(+). It catalyses the reaction 1alpha-hydroxyvitamin D2 + reduced [NADPH--hemoprotein reductase] + O2 = 1alpha,25-dihydroxyvitamin D2 + oxidized [NADPH--hemoprotein reductase] + H2O + H(+). It carries out the reaction alfacalcidol + reduced [NADPH--hemoprotein reductase] + O2 = calcitriol + oxidized [NADPH--hemoprotein reductase] + H2O + H(+). The protein operates within hormone biosynthesis; vitamin D biosynthesis. Its function is as follows. A cytochrome P450 monooxygenase involved in activation of vitamin D precursors. Catalyzes hydroxylation at C-25 of both forms of vitamin D, vitamin D(2) and D(3) (calciol). Can metabolize vitamin D analogs/prodrugs 1alpha-hydroxyvitamin D(2) (doxercalciferol) and 1alpha-hydroxyvitamin D(3) (alfacalcidol) forming 25-hydroxy derivatives. Mechanistically, uses molecular oxygen inserting one oxygen atom into a substrate, and reducing the second into a water molecule, with two electrons provided by NADPH via cytochrome P450 reductase (CPR; NADPH-ferrihemoprotein reductase). In Mus musculus (Mouse), this protein is Vitamin D 25-hydroxylase (Cyp2r1).